Consider the following 480-residue polypeptide: Histone-lysine N-methyltransferase ASHR1 (480 aa).

Residues Arg-11–Ile-248 enclose the SET domain. Residues Cys-56, Cys-59, Cys-68, Cys-71, Cys-77, Cys-81, His-89, and Cys-93 each contribute to the Zn(2+) site. Residues Cys-56–Cys-93 form an MYND-type zinc finger.

The protein belongs to the class V-like SAM-binding methyltransferase superfamily. Histone-lysine methyltransferase family. SET2 subfamily.

The protein localises to the nucleus. It is found in the chromosome. It carries out the reaction L-lysyl-[histone] + S-adenosyl-L-methionine = N(6)-methyl-L-lysyl-[histone] + S-adenosyl-L-homocysteine + H(+). Histone methyltransferase. This Arabidopsis thaliana (Mouse-ear cress) protein is Histone-lysine N-methyltransferase ASHR1 (ASHR1).